We begin with the raw amino-acid sequence, 119 residues long: Beta-2-microglobulin (119 aa).

A signal peptide spans 1–20 (MARFVVVALLVLLSLSGLEA). The region spanning 25–114 (PKIQVYSRHP…VTFSTPKTVK (90 aa)) is the Ig-like C1-type domain. An intrachain disulfide couples C45 to C100.

It belongs to the beta-2-microglobulin family. Heterodimer of an alpha chain and a beta chain. Beta-2-microglobulin is the beta-chain of major histocompatibility complex class I molecules.

It is found in the secreted. Its function is as follows. Component of the class I major histocompatibility complex (MHC). Involved in the presentation of peptide antigens to the immune system. This chain is Beta-2-microglobulin (B2M), found in Callimico goeldii (Goeldi's marmoset).